The primary structure comprises 356 residues: uncharacterized protein (356 aa).

This is an uncharacterized protein from Saccharolobus islandicus (Sulfolobus islandicus).